We begin with the raw amino-acid sequence, 278 residues long: HTH-type transcriptional activator RhaS (278 aa).

Positions 174 to 272 constitute an HTH araC/xylS-type domain; it reads NQLMAWLEDH…NWSPRDIRQG (99 aa). 2 consecutive DNA-binding regions (H-T-H motif) follow at residues 191-212 and 239-262; these read EAVAEQFSLSLRTLHRQLKQHT and VTEIAYRCGFGDSNHFSTLFRREF.

In terms of assembly, binds DNA as a dimer.

The protein resides in the cytoplasm. In terms of biological role, activates expression of the rhaBAD and rhaT operons. The protein is HTH-type transcriptional activator RhaS of Salmonella paratyphi A (strain ATCC 9150 / SARB42).